Consider the following 201-residue polypeptide: NAD(P)H dehydrogenase (quinone) (201 aa).

In terms of domain architecture, Flavodoxin-like spans 7-192; the sequence is ILVLYYSMYG…SIARYQGEYV (186 aa). FMN is bound by residues 13-18 and 81-83; these read SMYGHI and TRF. Tyrosine 15 contacts NAD(+). Tryptophan 101 contributes to the substrate binding site. Residues 116–121 and histidine 136 contribute to the FMN site; that span reads STGTGG.

The protein belongs to the WrbA family. Requires FMN as cofactor.

The enzyme catalyses a quinone + NADH + H(+) = a quinol + NAD(+). It catalyses the reaction a quinone + NADPH + H(+) = a quinol + NADP(+). The chain is NAD(P)H dehydrogenase (quinone) from Shigella sonnei (strain Ss046).